The sequence spans 173 residues: Small ribosomal subunit protein uS7 (173 aa).

Belongs to the universal ribosomal protein uS7 family. In terms of assembly, part of the 30S ribosomal subunit. Contacts proteins S9 and S11.

Functionally, one of the primary rRNA binding proteins, it binds directly to 16S rRNA where it nucleates assembly of the head domain of the 30S subunit. Is located at the subunit interface close to the decoding center, probably blocks exit of the E-site tRNA. The sequence is that of Small ribosomal subunit protein uS7 from Orientia tsutsugamushi (strain Boryong) (Rickettsia tsutsugamushi).